Reading from the N-terminus, the 30-residue chain is rRNA N-glycosylase (30 aa).

This sequence belongs to the ribosome-inactivating protein family. Type 1 RIP subfamily. In terms of tissue distribution, expressed in seeds.

It catalyses the reaction Endohydrolysis of the N-glycosidic bond at one specific adenosine on the 28S rRNA.. Exhibits N-glycosylase activity. Catalyzes the release of one adenine from a ribosome. Acts as a ribosome-inactivating protein and inhibits protein synthesis in a rabbit-reticulocyte lysate system and in various cell lines (in vitro). The chain is rRNA N-glycosylase from Saponaria ocymoides (Rock soapwort).